We begin with the raw amino-acid sequence, 175 residues long: Shikimate kinase (175 aa).

14–19 (GAGKST) contributes to the ATP binding site. A Mg(2+)-binding site is contributed by S18. Residues D36, R60, and G82 each coordinate substrate. R120 lines the ATP pocket. Residue R140 coordinates substrate. Q157 contributes to the ATP binding site.

This sequence belongs to the shikimate kinase family. In terms of assembly, monomer. The cofactor is Mg(2+).

The protein resides in the cytoplasm. The catalysed reaction is shikimate + ATP = 3-phosphoshikimate + ADP + H(+). It functions in the pathway metabolic intermediate biosynthesis; chorismate biosynthesis; chorismate from D-erythrose 4-phosphate and phosphoenolpyruvate: step 5/7. Catalyzes the specific phosphorylation of the 3-hydroxyl group of shikimic acid using ATP as a cosubstrate. This Histophilus somni (strain 2336) (Haemophilus somnus) protein is Shikimate kinase.